The following is a 325-amino-acid chain: tRNA N6-adenosine threonylcarbamoyltransferase (325 aa).

Fe cation contacts are provided by histidine 111 and histidine 115. Substrate-binding positions include 134-138 (LVSGG), aspartate 167, glycine 180, aspartate 184, and asparagine 284. Position 312 (aspartate 312) interacts with Fe cation.

Belongs to the KAE1 / TsaD family. Fe(2+) is required as a cofactor.

Its subcellular location is the cytoplasm. The enzyme catalyses L-threonylcarbamoyladenylate + adenosine(37) in tRNA = N(6)-L-threonylcarbamoyladenosine(37) in tRNA + AMP + H(+). In terms of biological role, required for the formation of a threonylcarbamoyl group on adenosine at position 37 (t(6)A37) in tRNAs that read codons beginning with adenine. Is involved in the transfer of the threonylcarbamoyl moiety of threonylcarbamoyl-AMP (TC-AMP) to the N6 group of A37, together with TsaE and TsaB. TsaD likely plays a direct catalytic role in this reaction. The chain is tRNA N6-adenosine threonylcarbamoyltransferase from Trichodesmium erythraeum (strain IMS101).